The primary structure comprises 466 residues: Probable Xaa-Pro aminopeptidase pepP (466 aa).

Mn(2+) contacts are provided by D264, D275, E398, and E438.

Belongs to the peptidase M24B family. Mn(2+) is required as a cofactor.

It carries out the reaction Release of any N-terminal amino acid, including proline, that is linked to proline, even from a dipeptide or tripeptide.. Functionally, catalyzes the removal of a penultimate prolyl residue from the N-termini of peptides. This Aspergillus niger (strain ATCC MYA-4892 / CBS 513.88 / FGSC A1513) protein is Probable Xaa-Pro aminopeptidase pepP (pepP).